Here is a 319-residue protein sequence, read N- to C-terminus: Insulin gene enhancer protein ISL-2 (319 aa).

LIM zinc-binding domains follow at residues 1-43 and 52-106; these read FLLR…CKRD and CAQC…RADH. Disordered regions lie at residues 106–151, 218–237, and 286–319; these read HGPP…EKTT, QQHSDKTSLQGLTGTPLVAG, and ESGSLGTSSGSDVTSLSSQLPDTPNSMVPSPAET. Residues 150–209 constitute a DNA-binding region (homeobox); that stretch reads TTRVRTVLNEKQLHTLRTCYAANPRPDALMKEQLVEMTGLSPRVIRVWFQNKRCKDKKKS. A compositionally biased stretch (polar residues) spans 218–230; the sequence is QQHSDKTSLQGLT. Residues 286 to 303 show a composition bias toward low complexity; it reads ESGSLGTSSGSDVTSLSS. Residues 304–319 are compositionally biased toward polar residues; the sequence is QLPDTPNSMVPSPAET.

It is found in the nucleus. In terms of biological role, transcriptional factor that defines subclasses of motoneurons that segregate into columns in the spinal cord and select distinct axon pathways. Acts in conjunction with LIM-1, LIM-3 and ISL-1. This is Insulin gene enhancer protein ISL-2 (ISL2) from Gallus gallus (Chicken).